The chain runs to 444 residues: MQPIEEVSQDTMAFVVAPGGALRGRLRVPGDKSISHRAIILGALAEGITQITGFLEGEDTLATLQAFRDLGVSIEGPEGGRVKIHGVSLQGLRAPEKPLYLGNSGTSVRLLAGLFAGQSFDVILRGDESLSRRPMRRVCDPLARMGAFIETTAQGTPPLHIHGGQSLYGIEYAMPMASAQVKSSLLLAGLYASGRTCVVEPAPTRDHSERMLAGFGYPVEREGAKVCIQGGGTLHGTVVEIPADISSAAFFMVGAAIGKGSDILLEHVGINPTRTGIIDILRRMGAEIEIRETGVVGGEPVAAIRVRASRLHGINIPEDLVPLAIDEFPALFIAAACAEGETVLAGAGELRVKESDRIQVMADGLQALGISAQPTADGIIIQGGELQGGEVHSHGDHRCAMAFAMASLVAKGPIIIRDCANVATSFPGFLELACGAGLAIRHGK.

Residues Lys-32, Ser-33, and Arg-37 each contribute to the 3-phosphoshikimate site. Residue Lys-32 coordinates phosphoenolpyruvate. Residues Gly-105 and Arg-133 each coordinate phosphoenolpyruvate. Ser-178, Gln-180, Asp-326, and Lys-353 together coordinate 3-phosphoshikimate. Gln-180 is a binding site for phosphoenolpyruvate. The active-site Proton acceptor is Asp-326. Phosphoenolpyruvate is bound by residues Arg-357 and Arg-398.

This sequence belongs to the EPSP synthase family. In terms of assembly, monomer.

It localises to the cytoplasm. The catalysed reaction is 3-phosphoshikimate + phosphoenolpyruvate = 5-O-(1-carboxyvinyl)-3-phosphoshikimate + phosphate. It participates in metabolic intermediate biosynthesis; chorismate biosynthesis; chorismate from D-erythrose 4-phosphate and phosphoenolpyruvate: step 6/7. Its function is as follows. Catalyzes the transfer of the enolpyruvyl moiety of phosphoenolpyruvate (PEP) to the 5-hydroxyl of shikimate-3-phosphate (S3P) to produce enolpyruvyl shikimate-3-phosphate and inorganic phosphate. The chain is 3-phosphoshikimate 1-carboxyvinyltransferase from Nitrosococcus oceani (strain ATCC 19707 / BCRC 17464 / JCM 30415 / NCIMB 11848 / C-107).